Consider the following 357-residue polypeptide: Peptide chain release factor 1 (357 aa).

The residue at position 233 (Gln233) is an N5-methylglutamine. Residues 284-305 (RSASISADRKSQVGTGDRSERI) are disordered.

This sequence belongs to the prokaryotic/mitochondrial release factor family. Methylated by PrmC. Methylation increases the termination efficiency of RF1.

Its subcellular location is the cytoplasm. Its function is as follows. Peptide chain release factor 1 directs the termination of translation in response to the peptide chain termination codons UAG and UAA. The sequence is that of Peptide chain release factor 1 from Clostridium novyi (strain NT).